The chain runs to 519 residues: Probable carboxypeptidase S-like 2 (519 aa).

The chain crosses the membrane as a helical span at residues 25–45; the sequence is FNLIKIIIRNLLIGILLMLVL. His151 provides a ligand contact to Zn(2+). Asp153 is a catalytic residue. Asp184 lines the Zn(2+) pocket. Glu218 functions as the Proton acceptor in the catalytic mechanism. The Zn(2+) site is built by Glu219, Asp246, and His490.

Belongs to the peptidase M20A family. Zn(2+) is required as a cofactor.

It localises to the membrane. The polypeptide is Probable carboxypeptidase S-like 2 (Dictyostelium discoideum (Social amoeba)).